The sequence spans 202 residues: Small ribosomal subunit protein uS4 (202 aa).

The S4 RNA-binding domain maps to 91 to 168; the sequence is SMLSSVLYNS…QKVPDYLEVD (78 aa).

Belongs to the universal ribosomal protein uS4 family. Part of the 30S ribosomal subunit. Contacts protein S5. The interaction surface between S4 and S5 is involved in control of translational fidelity.

Functionally, one of the primary rRNA binding proteins, it binds directly to 16S rRNA where it nucleates assembly of the body of the 30S subunit. In terms of biological role, with S5 and S12 plays an important role in translational accuracy. This Ehrlichia ruminantium (strain Welgevonden) protein is Small ribosomal subunit protein uS4.